A 314-amino-acid chain; its full sequence is 2,3-dihydroxyphenylpropionate/2,3-dihydroxicinnamic acid 1,2-dioxygenase (314 aa).

His-115 serves as the catalytic Proton donor. The active-site Proton acceptor is the His-179.

It belongs to the LigB/MhpB extradiol dioxygenase family. As to quaternary structure, homotetramer. Fe(2+) serves as cofactor.

It carries out the reaction 3-(2,3-dihydroxyphenyl)propanoate + O2 = (2Z,4E)-2-hydroxy-6-oxonona-2,4-dienedioate + H(+). The enzyme catalyses (2E)-3-(2,3-dihydroxyphenyl)prop-2-enoate + O2 = (2Z,4E,7E)-2-hydroxy-6-oxonona-2,4,7-trienedioate + H(+). Its pathway is aromatic compound metabolism; 3-phenylpropanoate degradation. Its function is as follows. Catalyzes the non-heme iron(II)-dependent oxidative cleavage of 2,3-dihydroxyphenylpropionic acid and 2,3-dihydroxicinnamic acid into 2-hydroxy-6-ketononadienedioate and 2-hydroxy-6-ketononatrienedioate, respectively. This Cupriavidus pinatubonensis (strain JMP 134 / LMG 1197) (Cupriavidus necator (strain JMP 134)) protein is 2,3-dihydroxyphenylpropionate/2,3-dihydroxicinnamic acid 1,2-dioxygenase.